The sequence spans 331 residues: 4-hydroxythreonine-4-phosphate dehydrogenase (331 aa).

Residues His136 and Thr137 each contribute to the substrate site. The a divalent metal cation site is built by His166, His211, and His266. 3 residues coordinate substrate: Lys274, Asn283, and Arg292.

It belongs to the PdxA family. As to quaternary structure, homodimer. Zn(2+) serves as cofactor. It depends on Mg(2+) as a cofactor. The cofactor is Co(2+).

The protein resides in the cytoplasm. The catalysed reaction is 4-(phosphooxy)-L-threonine + NAD(+) = 3-amino-2-oxopropyl phosphate + CO2 + NADH. The protein operates within cofactor biosynthesis; pyridoxine 5'-phosphate biosynthesis; pyridoxine 5'-phosphate from D-erythrose 4-phosphate: step 4/5. In terms of biological role, catalyzes the NAD(P)-dependent oxidation of 4-(phosphooxy)-L-threonine (HTP) into 2-amino-3-oxo-4-(phosphooxy)butyric acid which spontaneously decarboxylates to form 3-amino-2-oxopropyl phosphate (AHAP). This chain is 4-hydroxythreonine-4-phosphate dehydrogenase, found in Thioalkalivibrio sulfidiphilus (strain HL-EbGR7).